A 1120-amino-acid chain; its full sequence is Transcription-repair-coupling factor (1120 aa).

The Helicase ATP-binding domain maps to 591–756 (DLTNGMLMDR…LTGLKELSII (166 aa)). An ATP-binding site is contributed by 604–611 (GDVGFGKT). The DEEQ box motif lies at 709-712 (DEEQ). A Helicase C-terminal domain is found at 777 to 933 (IIRDALLREH…TIASHDADLR (157 aa)).

This sequence in the N-terminal section; belongs to the UvrB family. In the C-terminal section; belongs to the helicase family. RecG subfamily.

The protein resides in the cytoplasm. Functionally, couples transcription and DNA repair by recognizing RNA polymerase (RNAP) stalled at DNA lesions. Mediates ATP-dependent release of RNAP and its truncated transcript from the DNA, and recruitment of nucleotide excision repair machinery to the damaged site. This is Transcription-repair-coupling factor from Rickettsia typhi (strain ATCC VR-144 / Wilmington).